A 364-amino-acid polypeptide reads, in one-letter code: Developmentally-regulated GTP-binding protein 2 homolog (364 aa).

Residues 63-288 enclose the OBG-type G domain; the sequence is ARVALIGFPS…LLDKIWDYLN (226 aa). Residues 69 to 76, 115 to 119, and 246 to 249 each bind GTP; these read GFPSVGKS, DTPGI, and NKMD. In terms of domain architecture, TGS spans 288–363; sequence NLVRVYTKLR…EDEDVIQIVK (76 aa).

Belongs to the TRAFAC class OBG-HflX-like GTPase superfamily. OBG GTPase family.

The protein is Developmentally-regulated GTP-binding protein 2 homolog (drg2) of Dictyostelium discoideum (Social amoeba).